The sequence spans 1084 residues: Histone deacetylase 4 (1084 aa).

Positions 67–177 form a coiled coil; it reads REQQLQQELL…STEVKMKLQE (111 aa). The interaction with MEF2A stretch occupies residues 118–313; that stretch reads MLAMKHQQEL…NNSSGSVSAE (196 aa). The segment covering 133–163 has biased composition (basic and acidic residues); that stretch reads KLERHRQEQELEKQHREQKLQQLKNKEKGKE. 3 disordered regions span residues 133–166, 206–226, and 240–315; these read KLERHRQEQELEKQHREQKLQQLKNKEKGKESAV, TQHSSLDQSSPPQSGVSTSYN, and PLRK…AENG. At S210 the chain carries Phosphoserine. Position 246 is a phosphoserine; by CaMK4 and SIK1 (S246). A compositionally biased stretch (basic and acidic residues) spans 259-274; that stretch reads KVAERRSSPLLRRKDG. A compositionally biased stretch (low complexity) spans 290-312; the sequence is SACSSAPGSGPSSPNNSSGSVSA. A PxLPxI/L motif; mediates interaction with ANKRA2 and 14-3-3 proteins motif is present at residues 349–354; the sequence is PSLPNI. Phosphoserine is present on S350. S467 carries the phosphoserine; by CaMK4 and SIK1 modification. Disordered stretches follow at residues 509 to 531, 548 to 585, and 626 to 646; these read PKPSEPARQPESHPEETEEELRE, KEAHAQAGVQVKQEPIESDEEEAEPPREVEPGQRQPSE, and PLSRAQSSPASATFPVSVQEP. Positions 516-531 are enriched in basic and acidic residues; that stretch reads RQPESHPEETEEELRE. K559 participates in a covalent cross-link: Glycyl lysine isopeptide (Lys-Gly) (interchain with G-Cter in SUMO). S565 is subject to Phosphoserine. Over residues 629 to 641 the composition is skewed to polar residues; the sequence is RAQSSPASATFPV. A Phosphoserine; by CaMK4 modification is found at S632. S633 carries the phosphoserine modification. A histone deacetylase region spans residues 655–1084; sequence GLVYDTLMLK…EEPMEEEPPL (430 aa). Zn(2+) is bound by residues C667, C669, H675, and C751. Residue H803 is part of the active site. Residues 1051–1084 carry the Nuclear export signal motif; sequence EEAETVTAMASLSVGVKPAEKRPDEEPMEEEPPL. Residues 1061–1084 are disordered; it reads SLSVGVKPAEKRPDEEPMEEEPPL.

This sequence belongs to the histone deacetylase family. HD type 2 subfamily. In terms of assembly, homodimer. Homodimerization via its N-terminal domain. Interacts with MEF2A. Interacts with MEF2C and MEF2D. Interacts with AHRR. Interacts with NR2C1. Interacts with HDAC7. Interacts with a 14-3-3 chaperone proteins in a phosphorylation dependent manner. Interacts with 14-3-3 protein YWHAB. Interacts with BTBD14B. Interacts with KDM5B. Interacts with MYOCD. Interacts with MORC2. Interacts (via PxLPxI/L motif) with ANKRA2 (via ankyrin repeats). Interacts with CUL7 (as part of the 3M complex); negatively regulated by ANKRA2. Interacts with EP300 in the presence of TFAP2C. Interacts with HSPA1A and HSPA1B leading to their deacetylation at 'Lys-77'. Interacts with ZBTB7B; the interaction allows the recruitment of HDAC4 on CD8 loci for deacetylation and possible inhibition of CD8 genes expression. Interacts with DHX36. Interacts with SIK3; this interaction leads to HDAC4 retention in the cytoplasm. Interacts with ZNF638. Post-translationally, phosphorylated by CaMK4 at Ser-246, Ser-467 and Ser-632. Phosphorylation at other residues by CaMK2D is required for the interaction with 14-3-3. Phosphorylation at Ser-350, within the PxLPxI/L motif, impairs the binding of ANKRA2 but generates a high-affinity docking site for 14-3-3. In terms of processing, sumoylation on Lys-559 is promoted by the E3 SUMO-protein ligase RANBP2, and prevented by phosphorylation by CaMK4. As to expression, ubiquitous.

The protein localises to the nucleus. The protein resides in the cytoplasm. The catalysed reaction is N(6)-acetyl-L-lysyl-[histone] + H2O = L-lysyl-[histone] + acetate. Its function is as follows. Responsible for the deacetylation of lysine residues on the N-terminal part of the core histones (H2A, H2B, H3 and H4). Histone deacetylation gives a tag for epigenetic repression and plays an important role in transcriptional regulation, cell cycle progression and developmental events. Histone deacetylases act via the formation of large multiprotein complexes. Involved in muscle maturation via its interaction with the myocyte enhancer factors such as MEF2A, MEF2C and MEF2D. Involved in the MTA1-mediated epigenetic regulation of ESR1 expression in breast cancer. Deacetylates HSPA1A and HSPA1B at 'Lys-77' leading to their preferential binding to co-chaperone STUB1. This Homo sapiens (Human) protein is Histone deacetylase 4.